An 817-amino-acid polypeptide reads, in one-letter code: E3 ubiquitin-protein ligase TRIM9 (817 aa).

The RING-type zinc-finger motif lies at 10–50 (CPVCGSFYREPIILPCSHNLCQACARNILVQTPESESPQSR). Threonine 41 carries the post-translational modification Phosphothreonine. 4 positions are modified to phosphoserine: serine 44, serine 46, serine 49, and serine 53. 2 consecutive B box-type zinc fingers follow at residues 163 to 212 (AAAL…LVPP) and 224 to 266 (RKVS…VKAL). Residues cysteine 168, cysteine 171, cysteine 193, histidine 198, cysteine 229, histidine 232, cysteine 252, and histidine 258 each coordinate Zn(2+). Residues 273–340 (HKSQLSQALN…KAQLLARVNK (68 aa)) adopt a coiled-coil conformation. One can recognise a COS domain in the interval 374–432 (IKENDPSGFLQISDALIRRVHLTEDQWGKGTLTPRMTTDFDLSLDNSPLLQSIHQLDFV). Residues 440–535 (VPATPILQLE…KTLVLQTSEA (96 aa)) form the Fibronectin type-III domain. The segment at 535-557 (AAGAHETKPMKDTDSEEQTLPFP) is disordered. The span at 537–547 (GAHETKPMKDT) shows a compositional bias: basic and acidic residues. Residues 613–794 (ETQSASYSQL…VQVSLWAPGL (182 aa)) enclose the B30.2/SPRY domain.

Belongs to the TRIM/RBCC family. As to quaternary structure, interacts with SNAP25. In terms of processing, auto-ubiquitinated. In terms of tissue distribution, brain. Expression is higher in the cerebral cortex and hippocampus (at protein level). Its expression is mainly confined to the central nervous system. The developing neocortex, the dorsal thalamus, the midbrain, the basal area of the hindbrain and spinal cord show high level of expression during embryogenesis. In adult brain, it is detected in the Purkinje cells of the cerebellum, in the hippocampus, and in the cortex.

The protein resides in the cytoplasm. The protein localises to the cell projection. It localises to the dendrite. It is found in the cytoplasmic vesicle. Its subcellular location is the secretory vesicle. The protein resides in the synaptic vesicle. The protein localises to the synapse. It localises to the cytoskeleton. The catalysed reaction is S-ubiquitinyl-[E2 ubiquitin-conjugating enzyme]-L-cysteine + [acceptor protein]-L-lysine = [E2 ubiquitin-conjugating enzyme]-L-cysteine + N(6)-ubiquitinyl-[acceptor protein]-L-lysine.. The protein operates within protein modification; protein ubiquitination. In terms of biological role, E3 ubiquitin-protein ligase which ubiquitinates itself in cooperation with an E2 enzyme UBE2D2/UBC4 and serves as a targeting signal for proteasomal degradation. May play a role in regulation of neuronal functions. May act as a regulator of synaptic vesicle exocytosis by controlling the availability of SNAP25 for the SNARE complex formation. This Mus musculus (Mouse) protein is E3 ubiquitin-protein ligase TRIM9 (Trim9).